The chain runs to 101 residues: Small ribosomal subunit protein uS14 (101 aa).

Belongs to the universal ribosomal protein uS14 family. Part of the 30S ribosomal subunit. Contacts proteins S3 and S10.

Functionally, binds 16S rRNA, required for the assembly of 30S particles and may also be responsible for determining the conformation of the 16S rRNA at the A site. In Ruthia magnifica subsp. Calyptogena magnifica, this protein is Small ribosomal subunit protein uS14.